A 282-amino-acid polypeptide reads, in one-letter code: Putative 1-acyl-sn-glycerol-3-phosphate acyltransferase acl-2 (282 aa).

Helical transmembrane passes span 4 to 24 (FWSI…NIST) and 32 to 52 (ISFY…TMIP). The HXXXXD motif signature appears at 98–103 (HQSSLD). Residues 122-142 (ILAYVPFFNLGAYFSNTIFID) traverse the membrane as a helical segment.

It belongs to the 1-acyl-sn-glycerol-3-phosphate acyltransferase family.

Its subcellular location is the membrane. It catalyses the reaction a 1-acyl-sn-glycero-3-phosphate + an acyl-CoA = a 1,2-diacyl-sn-glycero-3-phosphate + CoA. The protein operates within phospholipid metabolism; CDP-diacylglycerol biosynthesis; CDP-diacylglycerol from sn-glycerol 3-phosphate: step 2/3. Functionally, converts lysophosphatidic acid (LPA) into phosphatidic acid by incorporating an acyl moiety at the sn-2 position of the glycerol backbone. The chain is Putative 1-acyl-sn-glycerol-3-phosphate acyltransferase acl-2 (acl-2) from Caenorhabditis elegans.